Here is a 90-residue protein sequence, read N- to C-terminus: Cell division topological specificity factor (90 aa).

The disordered stretch occupies residues 1 to 21 (MAGFWSKLFSSEEKPSSAQTA). Residues 10–21 (SSEEKPSSAQTA) show a composition bias toward basic and acidic residues.

The protein belongs to the MinE family.

In terms of biological role, prevents the cell division inhibition by proteins MinC and MinD at internal division sites while permitting inhibition at polar sites. This ensures cell division at the proper site by restricting the formation of a division septum at the midpoint of the long axis of the cell. The sequence is that of Cell division topological specificity factor from Acinetobacter baumannii (strain AB307-0294).